A 263-amino-acid chain; its full sequence is 3-methyl-2-oxobutanoate hydroxymethyltransferase (263 aa).

Mg(2+) contacts are provided by Asp44 and Asp83. Residues 44 to 45 (DS), Asp83, and Lys112 contribute to the 3-methyl-2-oxobutanoate site. Mg(2+) is bound at residue Glu114. The active-site Proton acceptor is the Glu181.

This sequence belongs to the PanB family. In terms of assembly, homodecamer; pentamer of dimers. It depends on Mg(2+) as a cofactor.

Its subcellular location is the cytoplasm. It carries out the reaction 3-methyl-2-oxobutanoate + (6R)-5,10-methylene-5,6,7,8-tetrahydrofolate + H2O = 2-dehydropantoate + (6S)-5,6,7,8-tetrahydrofolate. It functions in the pathway cofactor biosynthesis; (R)-pantothenate biosynthesis; (R)-pantoate from 3-methyl-2-oxobutanoate: step 1/2. Its function is as follows. Catalyzes the reversible reaction in which hydroxymethyl group from 5,10-methylenetetrahydrofolate is transferred onto alpha-ketoisovalerate to form ketopantoate. This Nitrosospira multiformis (strain ATCC 25196 / NCIMB 11849 / C 71) protein is 3-methyl-2-oxobutanoate hydroxymethyltransferase.